We begin with the raw amino-acid sequence, 1300 residues long: Zinc finger protein 536 (1300 aa).

Disordered regions lie at residues 1–26 (MEEA…GPVL) and 47–77 (FPEL…GQPM). Residues 48–69 (PELHPRPNPEEKPPASLEEKAH) show a composition bias toward basic and acidic residues. C2H2-type zinc fingers lie at residues 130–152 (YPCP…MRTH), 158–180 (FKCP…LRTH), 274–297 (FRCT…RILH), 300–323 (YKCT…EKAH), 345–367 (FRCE…MRKH), and 373–395 (HCCQ…MKVH). 2 disordered regions span residues 584–604 (HSTK…LESS) and 650–739 (SRVH…QQPA). Residues 594–604 (LPSKLDPLESS) are compositionally biased toward basic and acidic residues. A C2H2-type 7 zinc finger spans residues 631–653 (TECPDCGRVFRTYHQVVVHSRVH). Positions 657–674 (RKGEEDGLHVGLDERRGS) are enriched in basic and acidic residues. Residues 675–696 (GSDQESQSVSRSTTPGSSNVTE) are compositionally biased toward polar residues. C2H2-type zinc fingers lie at residues 751–773 (KDCP…LRIH) and 779–801 (YKCP…LERH). A disordered region spans residues 802-826 (HRERQNGAGPLSGQPPNQDHKDEMS). Phosphoserine occurs at positions 826 and 827. Polar residues predominate over residues 856 to 880 (SQQWTSGVLSSGDHSGQATGMSSEV). Disordered stretches follow at residues 856–893 (SQQW…LPSK), 937–985 (KDKA…PDAA), and 1124–1260 (SGAS…SLDK). 2 stretches are compositionally biased toward basic and acidic residues: residues 950 to 972 (HGVD…EKSQ) and 1133 to 1143 (KEPDGKAHSEE). 2 stretches are compositionally biased toward acidic residues: residues 1160-1170 (DLSDIASSEDM) and 1178-1187 (NDEEDVETEP). Positions 1194–1209 (LSALSKDSSSDGGDSL) are enriched in low complexity.

It belongs to the krueppel C2H2-type zinc-finger protein family.

Its subcellular location is the nucleus. In terms of biological role, transcriptional repressor that negatively regulates neuron differentiation by repressing retinoic acid-induced gene transcription. Binds and interrupts RARA from binding to retinoic acid response elements (RARE) composed of tandem 5'-AGGTCA-3' sites known as DR1-DR5. Recognizes and binds 2 copies of the core DNA sequence 5'-CCCCCA-3'. The protein is Zinc finger protein 536 (ZNF536) of Homo sapiens (Human).